We begin with the raw amino-acid sequence, 940 residues long: Isoleucine--tRNA ligase (940 aa).

The 'HIGH' region signature appears at 59–69 (PYANGDIHIGH). Glu563 is a binding site for L-isoleucyl-5'-AMP. The 'KMSKS' region signature appears at 604 to 608 (KMSKS). Lys607 serves as a coordination point for ATP. Zn(2+)-binding residues include Cys903, Cys906, Cys923, and Cys926.

It belongs to the class-I aminoacyl-tRNA synthetase family. IleS type 1 subfamily. As to quaternary structure, monomer. Zn(2+) is required as a cofactor.

It localises to the cytoplasm. It catalyses the reaction tRNA(Ile) + L-isoleucine + ATP = L-isoleucyl-tRNA(Ile) + AMP + diphosphate. In terms of biological role, catalyzes the attachment of isoleucine to tRNA(Ile). As IleRS can inadvertently accommodate and process structurally similar amino acids such as valine, to avoid such errors it has two additional distinct tRNA(Ile)-dependent editing activities. One activity is designated as 'pretransfer' editing and involves the hydrolysis of activated Val-AMP. The other activity is designated 'posttransfer' editing and involves deacylation of mischarged Val-tRNA(Ile). This Wigglesworthia glossinidia brevipalpis protein is Isoleucine--tRNA ligase.